A 444-amino-acid polypeptide reads, in one-letter code: Xaa-Pro dipeptidase (444 aa).

Mn(2+)-binding residues include Asp-247, Asp-258, His-340, Glu-385, and Glu-424.

Belongs to the peptidase M24B family. Bacterial-type prolidase subfamily. Mn(2+) is required as a cofactor.

The catalysed reaction is Xaa-L-Pro dipeptide + H2O = an L-alpha-amino acid + L-proline. Functionally, splits dipeptides with a prolyl residue in the C-terminal position. The polypeptide is Xaa-Pro dipeptidase (Proteus mirabilis (strain HI4320)).